A 330-amino-acid polypeptide reads, in one-letter code: tRNA U34 carboxymethyltransferase (330 aa).

Residues Lys-91, Trp-105, Lys-110, Gly-130, Asp-152–Ser-154, Ile-181–Glu-182, Met-196, Tyr-200, and Arg-315 each bind carboxy-S-adenosyl-L-methionine.

Belongs to the class I-like SAM-binding methyltransferase superfamily. CmoB family. As to quaternary structure, homotetramer.

The catalysed reaction is carboxy-S-adenosyl-L-methionine + 5-hydroxyuridine(34) in tRNA = 5-carboxymethoxyuridine(34) in tRNA + S-adenosyl-L-homocysteine + H(+). Functionally, catalyzes carboxymethyl transfer from carboxy-S-adenosyl-L-methionine (Cx-SAM) to 5-hydroxyuridine (ho5U) to form 5-carboxymethoxyuridine (cmo5U) at position 34 in tRNAs. The protein is tRNA U34 carboxymethyltransferase of Shewanella sp. (strain ANA-3).